Reading from the N-terminus, the 292-residue chain is Retinal homeobox protein Rx3 (292 aa).

The interval 1-27 is disordered; sequence MRLVGSQYKDMEDRLSPSARLVRSPGS. Positions 32–39 match the Octapeptide motif motif; that stretch reads HSIESILG. 2 disordered regions span residues 53–72 and 85–107; these read GSGKTGKDTEHLSPKKDSNK and SPDLPDADGGKLSDDENPKKKHR. 2 stretches are compositionally biased toward basic and acidic residues: residues 57–72 and 92–102; these read TGKDTEHLSPKKDSNK and DGGKLSDDENP. The homeobox DNA-binding region spans 106–165; the sequence is HRRNRTTFTTFQLHELERAFEKSHYPDVYSREELALKVNLPEVRVQVWFQNRRAKWRRQE. An OAR motif is present at residues 272–285; sequence TSIASLRMKAKEHI. The short motif at 278-282 is the Nuclear localization signal element; sequence RMKAK.

The protein belongs to the paired homeobox family. Bicoid subfamily.

The protein resides in the nucleus. In terms of biological role, plays a critical role in eye formation by regulating the initial specification of retinal cells and/or their subsequent proliferation. This is Retinal homeobox protein Rx3 (rx3) from Danio rerio (Zebrafish).